The chain runs to 76 residues: MKLTCVVIVAVLFLTAWTFVTAVPHSSNALENLYLKAHHEMNNPEASELNKRCYDGGTSCDSGIQCCSGWCIFVCF.

The N-terminal stretch at Met-1–Ala-22 is a signal peptide. A propeptide spanning residues Val-23–Arg-52 is cleaved from the precursor. 3 cysteine pairs are disulfide-bonded: Cys-53–Cys-67, Cys-60–Cys-71, and Cys-66–Cys-75.

Belongs to the conotoxin O1 superfamily. In terms of tissue distribution, expressed by the venom duct.

It is found in the secreted. Functionally, omega-conotoxins act at presynaptic membranes, they bind and block voltage-gated calcium channels (Cav). The polypeptide is Omega-conotoxin-like TxO3 (TXO3) (Conus textile (Cloth-of-gold cone)).